The sequence spans 479 residues: Trigger factor (479 aa).

The PPIase FKBP-type domain maps to 174 to 261; it reads GDIAVVSFSG…LKELKTRELP (88 aa). Residues 438 to 479 are disordered; sequence VLESEAKTSKPAAKSKGSKTKSTKTKTNKANTEKPASDKSKS. A compositionally biased stretch (basic residues) spans 453 to 464; sequence KGSKTKSTKTKT. Positions 468-479 are enriched in basic and acidic residues; the sequence is NTEKPASDKSKS.

It belongs to the FKBP-type PPIase family. Tig subfamily.

The protein resides in the cytoplasm. It carries out the reaction [protein]-peptidylproline (omega=180) = [protein]-peptidylproline (omega=0). In terms of biological role, involved in protein export. Acts as a chaperone by maintaining the newly synthesized protein in an open conformation. Functions as a peptidyl-prolyl cis-trans isomerase. In Prochlorococcus marinus (strain MIT 9313), this protein is Trigger factor.